The following is a 463-amino-acid chain: GTPase Der (463 aa).

The interval 1 to 20 (MDEGDEDLISGRGFTEGARK) is disordered. EngA-type G domains follow at residues 27-190 (GVLA…KQAE) and 202-375 (RRVA…ESWD). GTP is bound by residues 33–40 (GRPNVGKS), 80–84 (DTGGW), 142–145 (NKID), 208–215 (GRPNVGKS), 255–259 (DTAGI), and 320–323 (NKWD). Residues 376 to 458 (QRIPTGKLNA…PIQISVNIRE (83 aa)) form the KH-like domain.

Belongs to the TRAFAC class TrmE-Era-EngA-EngB-Septin-like GTPase superfamily. EngA (Der) GTPase family. Associates with the 50S ribosomal subunit.

Its function is as follows. GTPase that plays an essential role in the late steps of ribosome biogenesis. The protein is GTPase Der of Bifidobacterium longum (strain NCC 2705).